Consider the following 325-residue polypeptide: uncharacterized protein (325 aa).

Catalysis depends on tyrosine 59, which acts as the Proton donor. Substrate is bound at residue histidine 117.

This sequence belongs to the aldo/keto reductase family.

The protein resides in the cytoplasm. It is found in the nucleus. This is an uncharacterized protein from Schizosaccharomyces pombe (strain 972 / ATCC 24843) (Fission yeast).